Consider the following 548-residue polypeptide: 4-methyl-5-nitrocatechol 5-monooxygenase (548 aa).

The protein belongs to the PheA/TfdB FAD monooxygenase family. Monomer. Requires FAD as cofactor.

The catalysed reaction is 4-methyl-5-nitrocatechol + NADPH + O2 = 2-hydroxy-5-methylquinone + nitrite + NADP(+) + H2O + H(+). The enzyme catalyses 4-methyl-5-nitrocatechol + NADH + O2 = 2-hydroxy-5-methylquinone + nitrite + NAD(+) + H2O + H(+). Its activity is regulated as follows. Activated by magnesium or manganese ions. Inhibited by concentrations of 4-methyl-5-nitrocatechol (MNC) above 2 mM. Functionally, involved in the degradation of 2,4-dinitrotoluene (2,4-DNT). Catalyzes the removal of the nitro group from 4-methyl-5-nitrocatechol (MNC) to yield 2-hydroxy-5-methylquinone. It can use both NADH and NADPH as electron donors, but prefers NADPH. Also able to use 4-nitrocatechol as substrate. The sequence is that of 4-methyl-5-nitrocatechol 5-monooxygenase from Burkholderia sp.